We begin with the raw amino-acid sequence, 322 residues long: Ribose 1,5-bisphosphate isomerase (322 aa).

Substrate-binding positions include 20-23 (RGAG) and Arg-63. The Proton acceptor role is filled by Cys-133. 135-137 (SKA) provides a ligand contact to substrate. Asp-202 (proton donor) is an active-site residue. Substrate contacts are provided by residues 212–213 (NK) and Lys-238.

The protein belongs to the eIF-2B alpha/beta/delta subunits family. R15P isomerase subfamily. Homohexamer; trimer of dimers.

It carries out the reaction alpha-D-ribose 1,5-bisphosphate = D-ribulose 1,5-bisphosphate. Its activity is regulated as follows. Is highly activated in the presence of AMP, with an increase of &gt;40-fold in activity levels. Among other nucleotides, isomerase activity is slightly increased in the presence of GMP, but CMP, UMP, TMP, and NAD(+) have no effect; therefore, AMP is likely the major activator of R15P isomerase in vivo. To a lesser extent, various compounds with an adenosyl moiety, such as dAMP, adenosine, or methylthioadenosine, can also act as activators. The regulation of this enzyme by AMP prevents excess degradation of intracellular AMP by the archaeal AMP degradation pathway. In terms of biological role, catalyzes the isomerization of ribose 1,5-bisphosphate (R15P) to ribulose 1,5-bisphosphate (RuBP), the CO(2) acceptor and substrate for RubisCO. Only accepts the alpha-anomer of D-ribose 1,5-bisphosphate as substrate, being inactive on the beta-anomer. Displays a strict substrate specificity, since other phosphorylated sugars such as R5P, ribose, G16P, G6P, G1P, FBP, F6P, and PRPP, are not substrates. Functions in an archaeal AMP degradation pathway, together with AMP phosphorylase and RubisCO. This Thermococcus kodakarensis (strain ATCC BAA-918 / JCM 12380 / KOD1) (Pyrococcus kodakaraensis (strain KOD1)) protein is Ribose 1,5-bisphosphate isomerase.